Here is a 476-residue protein sequence, read N- to C-terminus: Aspartyl/glutamyl-tRNA(Asn/Gln) amidotransferase subunit B (476 aa).

This sequence belongs to the GatB/GatE family. GatB subfamily. Heterotrimer of A, B and C subunits.

The enzyme catalyses L-glutamyl-tRNA(Gln) + L-glutamine + ATP + H2O = L-glutaminyl-tRNA(Gln) + L-glutamate + ADP + phosphate + H(+). It catalyses the reaction L-aspartyl-tRNA(Asn) + L-glutamine + ATP + H2O = L-asparaginyl-tRNA(Asn) + L-glutamate + ADP + phosphate + 2 H(+). Its function is as follows. Allows the formation of correctly charged Asn-tRNA(Asn) or Gln-tRNA(Gln) through the transamidation of misacylated Asp-tRNA(Asn) or Glu-tRNA(Gln) in organisms which lack either or both of asparaginyl-tRNA or glutaminyl-tRNA synthetases. The reaction takes place in the presence of glutamine and ATP through an activated phospho-Asp-tRNA(Asn) or phospho-Glu-tRNA(Gln). The protein is Aspartyl/glutamyl-tRNA(Asn/Gln) amidotransferase subunit B of Latilactobacillus sakei subsp. sakei (strain 23K) (Lactobacillus sakei subsp. sakei).